We begin with the raw amino-acid sequence, 415 residues long: Calreticulin (415 aa).

Residues 1-20 form the signal peptide; sequence MANPKSLSLFLLSLLAIASA. Residue Asn-52 is glycosylated (N-linked (GlcNAc...) asparagine). Cys-106 and Cys-138 are joined by a disulfide. The an alpha-D-glucoside site is built by Tyr-110, Lys-112, Tyr-129, and Asp-136. Asn-152 carries an N-linked (GlcNAc...) asparagine glycan. Tandem repeats lie at residues 192-203, 211-222, 228-239, 246-257, 261-271, 275-285, and 289-299. A 4 X approximate repeats region spans residues 192–257; that stretch reads KQTGSLYTDW…DAKKPEDWDD (66 aa). The segment covering 208 to 253 has biased composition (basic and acidic residues); that stretch reads KIKDPEAKKPEDWDEKEYIPDPEDKKPEGYDDIPKEIPDPDAKKPE. Positions 208 to 276 are disordered; sequence KIKDPEAKKP…TIANPEYKGP (69 aa). The interval 261-299 is 3 X approximate repeats; it reads GEWTAPTIANPEYKGPWKPKKIKNPNYKGKWKAPMIDNP. Residue Glu-319 participates in an alpha-D-glucoside binding. A compositionally biased stretch (basic and acidic residues) spans 347–376; that stretch reads ETWGKNKDAEKAAFEEAEKKKEEEESKDDP. Positions 347–415 are disordered; it reads ETWGKNKDAE…DSAEDVHDEL (69 aa). Acidic residues-rich tracts occupy residues 377–397 and 404–415; these read ADSDADEDDDDADDTEGEDDG and AEDSAEDVHDEL. Positions 412-415 match the Prevents secretion from ER motif; that stretch reads HDEL.

The protein belongs to the calreticulin family.

Its subcellular location is the endoplasmic reticulum lumen. Its function is as follows. Molecular calcium-binding chaperone promoting folding, oligomeric assembly and quality control in the ER via the calreticulin/calnexin cycle. This lectin may interact transiently with almost all of the monoglucosylated glycoproteins that are synthesized in the ER. In Ricinus communis (Castor bean), this protein is Calreticulin.